A 318-amino-acid chain; its full sequence is Putative S-adenosyl-L-methionine-dependent methyltransferase BCG_0781c (318 aa).

S-adenosyl-L-methionine is bound by residues Asp135 and 164 to 165 (DL).

This sequence belongs to the UPF0677 family.

Exhibits S-adenosyl-L-methionine-dependent methyltransferase activity. The protein is Putative S-adenosyl-L-methionine-dependent methyltransferase BCG_0781c of Mycobacterium bovis (strain BCG / Pasteur 1173P2).